The chain runs to 90 residues: Small ribosomal subunit protein bS16 (90 aa).

Belongs to the bacterial ribosomal protein bS16 family.

In Lactiplantibacillus plantarum (strain ATCC BAA-793 / NCIMB 8826 / WCFS1) (Lactobacillus plantarum), this protein is Small ribosomal subunit protein bS16.